The primary structure comprises 151 residues: Copper transporter 3 (151 aa).

The next 2 membrane-spanning stretches (helical) occupy residues 52 to 72 (LKMYWVCLAVIFVISAFSECL) and 103 to 123 (YLVMLAVMSFNGGVFVAAMAG).

The protein belongs to the copper transporter (Ctr) (TC 1.A.56) family. SLC31A subfamily. As to expression, highly expressed in stems and at lower levels in leaves and flowers.

Its subcellular location is the membrane. In terms of biological role, involved in the transport of copper. The protein is Copper transporter 3 (COPT3) of Arabidopsis thaliana (Mouse-ear cress).